The sequence spans 337 residues: Visual pigment-like receptor peropsin (337 aa).

At 1 to 26 the chain is on the extracellular side; sequence MLSEASDFNSSGSRSEGSVFSRTEHS. N-linked (GlcNAc...) asparagine glycosylation is present at Asn9. Residues 27–49 traverse the membrane as a helical segment; that stretch reads VIAAYLIVAGITSILSNVVVLGI. At 50–61 the chain is on the cytoplasmic side; that stretch reads FIKYKELRTPTN. Residues 62–87 traverse the membrane as a helical segment; sequence AVIINLAFTDIGVSSIGYPMSAASDL. The Extracellular segment spans residues 88–101; it reads HGSWKFGHAGCQIY. Cys98 and Cys175 are oxidised to a cystine. A helical membrane pass occupies residues 102 to 121; the sequence is AGLNIFFGMVSIGLLTVVAM. The Cytoplasmic portion of the chain corresponds to 122–140; it reads DRYLTISCPDVGRRMTTNT. A helical transmembrane segment spans residues 141–164; sequence YLSMILGAWINGLFWALMPIIGWA. Residues 165–188 lie on the Extracellular side of the membrane; it reads SYAPDPTGATCTINWRNNDTSFVS. Asn182 carries an N-linked (GlcNAc...) asparagine glycan. Residues 189–212 form a helical membrane-spanning segment; that stretch reads YTMMVIVVNFIVPLTVMFYCYYHV. Over 213-240 the chain is Cytoplasmic; that stretch reads SRSLRLYAASDCTAHLHRDWADQADVTK. A helical membrane pass occupies residues 241–264; it reads MSVIMILMFLLAWSPYSIVCLWAC. Residues 265–272 are Extracellular-facing; that stretch reads FGNPKKIP. The chain crosses the membrane as a helical span at residues 273–297; sequence PSMAIIAPLFAKSSTFYNPCIYVAA. Lys284 carries the N6-(retinylidene)lysine modification. The Cytoplasmic segment spans residues 298–337; that stretch reads HKKFRKAMLAMFKCQPHLAVPEPSTLPMDMPQSSLAPVRI.

The protein belongs to the G-protein coupled receptor 1 family. Opsin subfamily. As to expression, found only in the eye, where it is localized to the retinal pigment epithelium (RPE). In the RPE, it is localized to the microvilli that surround the photoreceptor outer segments.

The protein resides in the membrane. In terms of biological role, may play a role in rpe physiology either by detecting light directly or by monitoring the concentration of retinoids or other photoreceptor-derived compounds. The protein is Visual pigment-like receptor peropsin (Rrh) of Mus musculus (Mouse).